A 109-amino-acid chain; its full sequence is uncharacterized protein (109 aa).

The helical transmembrane segment at 75–95 (LHFFFLFWLLNFILFFRIHLY) threads the bilayer.

The protein localises to the membrane. This is an uncharacterized protein from Schizosaccharomyces pombe (strain 972 / ATCC 24843) (Fission yeast).